We begin with the raw amino-acid sequence, 265 residues long: 4-hydroxy-tetrahydrodipicolinate reductase (265 aa).

Residues 7 to 12 (GASGRM) and aspartate 33 contribute to the NAD(+) site. Position 34 (arginine 34) interacts with NADP(+). NAD(+) is bound by residues 96-98 (GTT) and 120-123 (AANM). Residue histidine 153 is the Proton donor/acceptor of the active site. Histidine 154 contacts (S)-2,3,4,5-tetrahydrodipicolinate. The active-site Proton donor is lysine 157. 163–164 (GT) contacts (S)-2,3,4,5-tetrahydrodipicolinate.

The protein belongs to the DapB family.

It localises to the cytoplasm. The catalysed reaction is (S)-2,3,4,5-tetrahydrodipicolinate + NAD(+) + H2O = (2S,4S)-4-hydroxy-2,3,4,5-tetrahydrodipicolinate + NADH + H(+). It catalyses the reaction (S)-2,3,4,5-tetrahydrodipicolinate + NADP(+) + H2O = (2S,4S)-4-hydroxy-2,3,4,5-tetrahydrodipicolinate + NADPH + H(+). The protein operates within amino-acid biosynthesis; L-lysine biosynthesis via DAP pathway; (S)-tetrahydrodipicolinate from L-aspartate: step 4/4. In terms of biological role, catalyzes the conversion of 4-hydroxy-tetrahydrodipicolinate (HTPA) to tetrahydrodipicolinate. In Burkholderia orbicola (strain AU 1054), this protein is 4-hydroxy-tetrahydrodipicolinate reductase.